The chain runs to 375 residues: E3 ubiquitin-protein ligase FANCL (375 aa).

The UBC-RWD region (URD) stretch occupies residues 104-294; sequence QPPSCSFCKD…KDVLEIDFPA (191 aa). Residues 307–363 form an RING-type; degenerate zinc finger; that stretch reads CGICYARHLNGAIPDQVCNNPQCGQPFHEICLYEWLRGLSTSRQSFNVFFGDCPYCS.

As to quaternary structure, belongs to the multisubunit FA complex composed of FANCA, FANCB, FANCC, FANCE, FANCF, FANCG, FANCL/PHF9 and FANCM. In complex with FANCF, FANCA and FANCG, but not with FANCC, nor FANCE, interacts with HES1; this interaction may be essential for the stability and nuclear localization of FA core complex proteins. Interacts with FANCI. Interacts with GGN. Interacts (via the RING-type zinc finger) with UBE2T and UBE2W. The RING-type zinc finger domain is monoubiquitinated in the presence of UBE2T and UBE2W.

The protein resides in the cytoplasm. The protein localises to the nucleus. It carries out the reaction S-ubiquitinyl-[E2 ubiquitin-conjugating enzyme]-L-cysteine + [acceptor protein]-L-lysine = [E2 ubiquitin-conjugating enzyme]-L-cysteine + N(6)-ubiquitinyl-[acceptor protein]-L-lysine.. Its pathway is protein modification; protein ubiquitination. Ubiquitin ligase protein that mediates monoubiquitination of FANCD2, a key step in the DNA damage pathway. Also mediates monoubiquitination of FANCI. May stimulate the ubiquitin release from UBE2W. May be required for proper primordial germ cell proliferation in the embryonic stage, whereas it is probably not needed for spermatogonial proliferation after birth. The chain is E3 ubiquitin-protein ligase FANCL (Fancl) from Mus musculus (Mouse).